The following is a 174-amino-acid chain: Peptidyl-prolyl cis-trans isomerase-like 1 (174 aa).

A PPIase cyclophilin-type domain is found at Ser-5–Leu-159.

This sequence belongs to the cyclophilin-type PPIase family. PPIL1 subfamily.

It catalyses the reaction [protein]-peptidylproline (omega=180) = [protein]-peptidylproline (omega=0). Functionally, PPIases accelerate the folding of proteins. It catalyzes the cis-trans isomerization of proline imidic peptide bonds in oligopeptides. The protein is Peptidyl-prolyl cis-trans isomerase-like 1 (CYP1) of Cryptococcus neoformans var. neoformans serotype D (strain B-3501A) (Filobasidiella neoformans).